A 35-amino-acid chain; its full sequence is Pheromone-binding protein 2 (35 aa).

This sequence belongs to the PBP/GOBP family. Homodimer. Antenna.

Its function is as follows. This major soluble protein in olfactory sensilla of male moths might serve to solubilize the extremely hydrophobic pheromone molecules and to transport pheromone through the aqueous lymph to receptors located on olfactory cilia. The protein is Pheromone-binding protein 2 of Lymantria dispar (Gypsy moth).